The chain runs to 95 residues: Co-chaperonin GroES (95 aa).

The protein belongs to the GroES chaperonin family. As to quaternary structure, heptamer of 7 subunits arranged in a ring. Interacts with the chaperonin GroEL.

The protein resides in the cytoplasm. In terms of biological role, together with the chaperonin GroEL, plays an essential role in assisting protein folding. The GroEL-GroES system forms a nano-cage that allows encapsulation of the non-native substrate proteins and provides a physical environment optimized to promote and accelerate protein folding. GroES binds to the apical surface of the GroEL ring, thereby capping the opening of the GroEL channel. This is Co-chaperonin GroES from Geobacter sulfurreducens (strain ATCC 51573 / DSM 12127 / PCA).